Reading from the N-terminus, the 1171-residue chain is Myosin-B/C (1171 aa).

Positions 105–780 (ETVDDIGYLP…AAKELSILQR (676 aa)) constitute a Myosin motor domain. 199-206 (GESGAGKT) serves as a coordination point for ATP. Residues 671–681 (AHFIRCLKPNE) are actin-binding. A tail region spans residues 810-1171 (IHFLTRLESN…CFEACAPDRP (362 aa)).

It belongs to the TRAFAC class myosin-kinesin ATPase superfamily. Myosin family.

It localises to the cytoplasm. Functionally, myosins are actin-based motor molecules with ATPase activity. Unconventional myosins serve in intracellular movements. Their highly divergent tails are presumed to bind to membranous compartments, which would be moved relative to actin filaments. Plays a role in proper daughter cell budding and separation. The sequence is that of Myosin-B/C from Toxoplasma gondii.